Reading from the N-terminus, the 194-residue chain is Small ribosomal subunit protein uS7 (194 aa).

It belongs to the universal ribosomal protein uS7 family. In terms of assembly, part of the 30S ribosomal subunit.

Functionally, one of the primary rRNA binding proteins, it binds directly to 16S rRNA where it nucleates assembly of the head domain of the 30S subunit. Is located at the subunit interface close to the decoding center. This chain is Small ribosomal subunit protein uS7, found in Methanococcus vannielii (strain ATCC 35089 / DSM 1224 / JCM 13029 / OCM 148 / SB).